The chain runs to 90 residues: Small ribosomal subunit protein bS16 (90 aa).

This sequence belongs to the bacterial ribosomal protein bS16 family.

This is Small ribosomal subunit protein bS16 from Lactobacillus helveticus (strain DPC 4571).